Reading from the N-terminus, the 988-residue chain is Transcription regulator srbA precursor (988 aa).

Residues 1 to 427 (MSTPGIGGDF…SSWHARAISH (427 aa)) lie on the Cytoplasmic side of the membrane. Disordered regions lie at residues 53–85 (AFPETANASPSSPFDLAFISPSASSGREASDAM) and 108–169 (GDLN…KKRA). Low complexity predominate over residues 125-136 (SLSVHSNSPLSS). The segment at 165–178 (SKKRAHNVIEKRYR) is basic motif. The 72-residue stretch at 165–236 (SKKRAHNVIE…SKATEYIRHL (72 aa)) folds into the bHLH domain. The helix-loop-helix motif stretch occupies residues 179–236 (ANLNEKIAELRDSVPSLRASYKQANGNSGDDDDDGVTSASKLNKASILSKATEYIRHL). Residues 226 to 260 (LSKATEYIRHLEIRNKRLEEENTALKIRLRQLDKA) adopt a coiled-coil conformation. Residues 267–291 (SAASVSSPSDCTVSTESGASSSPSV) are compositionally biased toward polar residues. Residues 267 to 313 (SAASVSSPSDCTVSTESGASSSPSVFSHAEDVPSDHSPTSSHPPEGL) form a disordered region. The span at 301–310 (DHSPTSSHPP) shows a compositional bias: low complexity. A helical transmembrane segment spans residues 428–447 (FLMLAILVVGSAFIVFVYLF). The Lumenal segment spans residues 448 to 988 (NSDPRRQYSA…SDNLLLSDES (541 aa)). Residues 866–881 (PPSPMSKASDMLSSSS) show a composition bias toward low complexity. The interval 866-900 (PPSPMSKASDMLSSSSDDGEDGASQRNNNIIPHPM) is disordered.

In terms of processing, in low oxygen or sterol conditions, undergoes proteolytic cleavage by rhomboid-type protease rbdB and is released as soluble transcription factor from the membrane.

The protein localises to the endoplasmic reticulum membrane. It is found in the nucleus. Its function is as follows. Precursor of the transcription factor srbA, which is embedded in the endoplasmic reticulum membrane. Low oxygen or sterol conditions promote processing of this form, releasing the transcription factor form that translocates into the nucleus and activates transcription of genes required for adaptation to anaerobic growth. In terms of biological role, transcription factor that regulates sterol biosynthesis and hyphal morphology. Plays a critical role in ergosterol biosynthesis, resistance to the azole class of antifungal drugs, and in maintenance of cell polarity. Directly binds erg11A/cyp51A upstream DNA sequence at tandem repeats, called TR34 and TR46, that produce duplicated binding sites. Also mediates regulation of iron acquisition in response to hypoxia and low iron conditions via activation of extra- and intracellular siderophore production. Positively regulates the expression of the other hypoxia adaptation key transcription factor srbB. Required for the azole-sensing and response to azole stress. Binds the high-affinity sites 5'-A-T-C-G/A-T/G-A/G-C/T-G/C-A-T-3' of target promoters. Required for virulence in murine models of invasive pulmonary aspergillosis (IPA). The sequence is that of Transcription regulator srbA precursor from Aspergillus fumigatus (strain ATCC MYA-4609 / CBS 101355 / FGSC A1100 / Af293) (Neosartorya fumigata).